The chain runs to 244 residues: uncharacterized protein (244 aa).

One can recognise an HTH gntR-type domain in the interval 12–80 (VALWRQIADR…QGRGTMIERK (69 aa)). Residues 40–59 (ETALAAEFGVNRHTVRSALA) constitute a DNA-binding region (H-T-H motif).

This is an uncharacterized protein from Rhizobium meliloti (strain 1021) (Ensifer meliloti).